Consider the following 374-residue polypeptide: uncharacterized protein (374 aa).

Residues 182–201 (PALGESPQGQKSSASSDKAV) are disordered. Polar residues predominate over residues 188–197 (PQGQKSSASS).

This is an uncharacterized protein from Rattus norvegicus (Rat).